The following is a 191-amino-acid chain: uncharacterized protein (191 aa).

In terms of domain architecture, HTH tetR-type spans 5–65; sequence GDSREKILHT…IEAVTYTGKI (61 aa). Positions 28–47 form a DNA-binding region, H-T-H motif; sequence GLNQIVKESGAPKGSLYHFF.

This is an uncharacterized protein from Bacillus subtilis (strain 168).